The primary structure comprises 122 residues: Large ribosomal subunit protein uL14 (122 aa).

Belongs to the universal ribosomal protein uL14 family. In terms of assembly, part of the 50S ribosomal subunit. Forms a cluster with proteins L3 and L19. In the 70S ribosome, L14 and L19 interact and together make contacts with the 16S rRNA in bridges B5 and B8.

Binds to 23S rRNA. Forms part of two intersubunit bridges in the 70S ribosome. In Anaeromyxobacter dehalogenans (strain 2CP-1 / ATCC BAA-258), this protein is Large ribosomal subunit protein uL14.